A 332-amino-acid polypeptide reads, in one-letter code: Geranylgeranyl diphosphate synthase (332 aa).

Isopentenyl diphosphate is bound by residues lysine 45, arginine 48, and histidine 77. Mg(2+) contacts are provided by aspartate 84 and aspartate 88. Position 93 (arginine 93) interacts with an all-trans-polyprenyl diphosphate. Arginine 94 is a binding site for isopentenyl diphosphate. An all-trans-polyprenyl diphosphate contacts are provided by lysine 177, threonine 178, glutamine 215, lysine 232, and lysine 242.

The protein belongs to the FPP/GGPP synthase family. The cofactor is Mg(2+).

The catalysed reaction is isopentenyl diphosphate + (2E,6E)-farnesyl diphosphate = (2E,6E,10E)-geranylgeranyl diphosphate + diphosphate. It functions in the pathway isoprenoid biosynthesis; geranylgeranyl diphosphate biosynthesis; geranylgeranyl diphosphate from farnesyl diphosphate and isopentenyl diphosphate: step 1/1. Its function is as follows. Catalyzes the condensation of isopentenyl pyrophosphate with the allylic pyrophosphates to yield geranylgeranyl diphosphate (GGPP) which is a precursor of the ether-linked lipids. The polypeptide is Geranylgeranyl diphosphate synthase (gds) (Saccharolobus solfataricus (strain ATCC 35092 / DSM 1617 / JCM 11322 / P2) (Sulfolobus solfataricus)).